The sequence spans 752 residues: Myb-related protein A (752 aa).

The disordered stretch occupies residues 1-22; the sequence is MAKRSRSEDEDDDLQYADHDYE. 3 HTH myb-type domains span residues 30-81, 82-137, and 138-188; these read KKLW…QKVL, NPEL…NPEV, and KKSS…RRKV. 3 consecutive DNA-binding regions (H-T-H motif) follow at residues 58–81, 110–133, and 161–184; these read WTLI…QKVL, WSLI…HNHL, and WAEI…NSTM. Lysine 199 is covalently cross-linked (Glycyl lysine isopeptide (Lys-Gly) (interchain with G-Cter in SUMO2)). The interval 230-295 is transcriptional activation domain; it reads IPGYQYVSPE…RIPSQPGSFS (66 aa). Positions 298 to 553 are negative regulatory domain; the sequence is SGSFLMDDNM…IRRSILGTTP (256 aa). An N6-acetyllysine modification is found at lysine 394. A disordered region spans residues 451–480; that stretch reads RKMRVGHSPGSELRDGSLNDGGNMALKHTP. Residues lysine 592 and lysine 602 each participate in a glycyl lysine isopeptide (Lys-Gly) (interchain with G-Cter in SUMO2) cross-link.

Component of the DREAM complex (also named LINC complex) at least composed of E2F4, E2F5, LIN9, LIN37, LIN52, LIN54, MYBL1, MYBL2, RBL1, RBL2, RBBP4, TFDP1 and TFDP2. The complex exists in quiescent cells where it represses cell cycle-dependent genes. It dissociates in S phase when LIN9, LIN37, LIN52 and LIN54 form a subcomplex that binds to MYBL2. Expressed in a variety of lymphoid and solid tumor lines cultured in vitro.

It is found in the nucleus. Functionally, transcription factor that specifically recognizes the sequence 5'-YAAC[GT]G-3'. Acts as a master regulator of male meiosis by promoting expression of piRNAs: activates expression of both piRNA precursor RNAs and expression of protein-coding genes involved in piRNA metabolism. The piRNA metabolic process mediates the repression of transposable elements during meiosis by forming complexes composed of piRNAs and Piwi proteins and governs the methylation and subsequent repression of transposons, which is essential for the germline integrity. Transcriptional activator of SOX30. The protein is Myb-related protein A (MYBL1) of Homo sapiens (Human).